Reading from the N-terminus, the 512-residue chain is Cytochrome P450 4d1 (512 aa).

2 residues coordinate heme: E316 and C456.

It belongs to the cytochrome P450 family. Heme serves as cofactor.

The protein resides in the endoplasmic reticulum membrane. The protein localises to the microsome membrane. Functionally, involved in the metabolism of insect hormones and in the breakdown of synthetic insecticides. The protein is Cytochrome P450 4d1 (Cyp4d1) of Drosophila melanogaster (Fruit fly).